The sequence spans 1406 residues: Carboxypeptidase D (1406 aa).

The signal sequence occupies residues 1–25 (MPTLGLLFASIGIAVLAMGVPHCRG). Residues 26 to 1312 (YTIKEDESFL…VNEHVFGLPR (1287 aa)) lie on the Extracellular side of the membrane. Peptidase M14 domains lie at 39-335 (HYAS…LRQA) and 455-760 (EHHN…IEQV). Residues His101 and Glu104 each coordinate Zn(2+). An N-linked (GlcNAc...) asparagine glycan is attached at Asn133. Disulfide bonds link Cys156–Cys309, Cys236–Cys237, and Cys268–Cys308. Position 217 (His217) interacts with Zn(2+). N-linked (GlcNAc...) asparagine glycosylation occurs at Asn269. Residue Glu305 is the Proton donor/acceptor of the active site. Asn458 carries an N-linked (GlcNAc...) asparagine glycan. Residues His517 and Glu520 each contribute to the Zn(2+) site. Asn549 and Asn612 each carry an N-linked (GlcNAc...) asparagine glycan. Residue His626 participates in Zn(2+) binding. An N-linked (GlcNAc...) asparagine glycan is attached at Asn652. The active-site Proton donor/acceptor is Glu730. Asn787, Asn808, Asn981, Asn1152, and Asn1251 each carry an N-linked (GlcNAc...) asparagine glycan. A Peptidase M14 3 domain is found at 863-1121 (RYHTNPQVRA…DKIKNFLALV (259 aa)). The chain crosses the membrane as a helical span at residues 1313-1333 (FLFILCASVLIIVGVIVCVLC). Residues 1334–1406 (AQFWFYRRHR…TNYSFIIQAA (73 aa)) are Cytoplasmic-facing. The Cell attachment site motif lies at 1343–1345 (RGD). Ser1380 carries the post-translational modification Phosphoserine.

This sequence belongs to the peptidase M14 family. In terms of assembly, monomer. Requires Zn(2+) as cofactor. As to expression, expressed in the central nervous system (CNS) of adults and larvae. In the adult brain, increased levels of expression in the mushroom body (MB) and neurosecretory cells.

It localises to the membrane. Its subcellular location is the cytoplasm. The protein localises to the perinuclear region. The protein resides in the golgi apparatus. It is found in the trans-Golgi network. It localises to the secreted. It carries out the reaction Releases C-terminal Arg and Lys from polypeptides.. Its activity is regulated as follows. Inhibited by 2-guanidinoethylmercaptosuccinic acid (GEMSA). Its function is as follows. Metallocarboxypeptidase that catalyzes the release of C-terminal arginine or lysine residues from peptides and proteins. Functionally important for processing a broad range of proteins including growth factors, peptide hormones (such as Akh) and neuropeptides. Consequently, it is involved in a wide range of processes including viability, memory formation, locomotive activity, wing formation, and peptide-regulated behaviors such as starvation-induced hyperactivity, appetitive gustatory preference, and cold and ethanol sensitivity. Key enzyme in neuropeptide processing. Involved in regulation of memory formation, possibly via the insulin pathway in neurosecretory cells. This Drosophila melanogaster (Fruit fly) protein is Carboxypeptidase D.